Consider the following 486-residue polypeptide: Siroheme synthase (486 aa).

The segment at 1-203 (MNYFPIFANL…RQNTLAEREL (203 aa)) is precorrin-2 dehydrogenase /sirohydrochlorin ferrochelatase. Residues 22–23 (AV) and 43–44 (KH) each bind NAD(+). Residue S128 is modified to Phosphoserine. The segment at 217-486 (GSVSLVGAGP…LGTGQEQQAA (270 aa)) is uroporphyrinogen-III C-methyltransferase. P226 contacts S-adenosyl-L-methionine. D249 acts as the Proton acceptor in catalysis. The active-site Proton donor is the K271. Residues 302–304 (GGD), V307, 332–333 (TA), M384, and G413 each bind S-adenosyl-L-methionine.

The protein in the N-terminal section; belongs to the precorrin-2 dehydrogenase / sirohydrochlorin ferrochelatase family. It in the C-terminal section; belongs to the precorrin methyltransferase family.

The enzyme catalyses uroporphyrinogen III + 2 S-adenosyl-L-methionine = precorrin-2 + 2 S-adenosyl-L-homocysteine + H(+). It catalyses the reaction precorrin-2 + NAD(+) = sirohydrochlorin + NADH + 2 H(+). It carries out the reaction siroheme + 2 H(+) = sirohydrochlorin + Fe(2+). It functions in the pathway cofactor biosynthesis; adenosylcobalamin biosynthesis; precorrin-2 from uroporphyrinogen III: step 1/1. The protein operates within cofactor biosynthesis; adenosylcobalamin biosynthesis; sirohydrochlorin from precorrin-2: step 1/1. It participates in porphyrin-containing compound metabolism; siroheme biosynthesis; precorrin-2 from uroporphyrinogen III: step 1/1. Its pathway is porphyrin-containing compound metabolism; siroheme biosynthesis; siroheme from sirohydrochlorin: step 1/1. It functions in the pathway porphyrin-containing compound metabolism; siroheme biosynthesis; sirohydrochlorin from precorrin-2: step 1/1. Its function is as follows. Multifunctional enzyme that catalyzes the SAM-dependent methylations of uroporphyrinogen III at position C-2 and C-7 to form precorrin-2 via precorrin-1. Then it catalyzes the NAD-dependent ring dehydrogenation of precorrin-2 to yield sirohydrochlorin. Finally, it catalyzes the ferrochelation of sirohydrochlorin to yield siroheme. The polypeptide is Siroheme synthase (Neisseria meningitidis serogroup A / serotype 4A (strain DSM 15465 / Z2491)).